Consider the following 181-residue polypeptide: Ribonuclease HII (181 aa).

Positions 1–181 constitute an RNase H type-2 domain; sequence MICGIDEVGR…SLHRKNFKLI (181 aa). Residues Asp6, Glu7, and Asp98 each contribute to the a divalent metal cation site.

It belongs to the RNase HII family. Requires Mn(2+) as cofactor. Mg(2+) serves as cofactor.

The protein resides in the cytoplasm. The catalysed reaction is Endonucleolytic cleavage to 5'-phosphomonoester.. Its function is as follows. Endonuclease that specifically degrades the RNA of RNA-DNA hybrids. The polypeptide is Ribonuclease HII (rnhB) (Borreliella burgdorferi (strain ATCC 35210 / DSM 4680 / CIP 102532 / B31) (Borrelia burgdorferi)).